The sequence spans 481 residues: Exodeoxyribonuclease I (481 aa).

In terms of domain architecture, Exonuclease spans 12–193 (LFYDYETFGK…SSDVYATMNI (182 aa)). 3 residues coordinate Mg(2+): aspartate 15, glutamate 17, and aspartate 186. Glutamate 17 is a substrate binding site. The region spanning 202–350 (PKLFNFFFKY…KLKKFLCSIA (149 aa)) is the ExoI SH3-like domain. Residues 356-471 (NGSNVDLKMY…ELFEYVKYTR (116 aa)) enclose the ExoI C-terminal domain.

Monomer. Interacts with ssb (via C-terminus); this interaction stimulates the exonuclease activity by recruiting the enzyme to its substrate. Requires Mg(2+) as cofactor.

It catalyses the reaction Exonucleolytic cleavage in the 3'- to 5'-direction to yield nucleoside 5'-phosphates.. Functionally, degrades single-stranded DNA (ssDNA) in a highly processive manner. Also functions as a DNA deoxyribophosphodiesterase that releases deoxyribose-phosphate moieties following the cleavage of DNA at an apurinic/apyrimidinic (AP) site by either an AP endonuclease or AP lyase. The polypeptide is Exodeoxyribonuclease I (sbcB) (Buchnera aphidicola subsp. Baizongia pistaciae (strain Bp)).